A 755-amino-acid polypeptide reads, in one-letter code: 1,4-alpha-glucan branching enzyme GlgB (755 aa).

Catalysis depends on D435, which acts as the Nucleophile. E488 functions as the Proton donor in the catalytic mechanism.

This sequence belongs to the glycosyl hydrolase 13 family. GlgB subfamily. In terms of assembly, monomer.

It carries out the reaction Transfers a segment of a (1-&gt;4)-alpha-D-glucan chain to a primary hydroxy group in a similar glucan chain.. It participates in glycan biosynthesis; glycogen biosynthesis. Catalyzes the formation of the alpha-1,6-glucosidic linkages in glycogen by scission of a 1,4-alpha-linked oligosaccharide from growing alpha-1,4-glucan chains and the subsequent attachment of the oligosaccharide to the alpha-1,6 position. This chain is 1,4-alpha-glucan branching enzyme GlgB, found in Vibrio parahaemolyticus serotype O3:K6 (strain RIMD 2210633).